Reading from the N-terminus, the 334-residue chain is Probable GTP 3',8-cyclase (334 aa).

Positions 24–256 constitute a Radical SAM core domain; the sequence is PYGRKVTGLR…RKKYIIDGVE (233 aa). A GTP-binding site is contributed by arginine 33. [4Fe-4S] cluster contacts are provided by cysteine 40 and cysteine 44. Tyrosine 46 serves as a coordination point for S-adenosyl-L-methionine. A [4Fe-4S] cluster-binding site is contributed by cysteine 47. Residue lysine 85 participates in GTP binding. Glycine 89 is a binding site for S-adenosyl-L-methionine. Threonine 113 lines the GTP pocket. Serine 137 is an S-adenosyl-L-methionine binding site. Lysine 176 serves as a coordination point for GTP. [4Fe-4S] cluster is bound by residues cysteine 269 and cysteine 272. 274–276 is a binding site for GTP; that stretch reads RLR. [4Fe-4S] cluster is bound at residue cysteine 286.

This sequence belongs to the radical SAM superfamily. MoaA family. [4Fe-4S] cluster serves as cofactor.

It catalyses the reaction GTP + AH2 + S-adenosyl-L-methionine = (8S)-3',8-cyclo-7,8-dihydroguanosine 5'-triphosphate + 5'-deoxyadenosine + L-methionine + A + H(+). It functions in the pathway cofactor biosynthesis; molybdopterin biosynthesis. In terms of biological role, catalyzes the cyclization of GTP to (8S)-3',8-cyclo-7,8-dihydroguanosine 5'-triphosphate. The polypeptide is Probable GTP 3',8-cyclase (Methanosarcina acetivorans (strain ATCC 35395 / DSM 2834 / JCM 12185 / C2A)).